Reading from the N-terminus, the 192-residue chain is Glycerol-3-phosphate acyltransferase (192 aa).

Transmembrane regions (helical) follow at residues 4–24, 54–74, 80–100, 112–132, and 154–174; these read MFWL…AILL, LAIL…LIAS, IAQQ…PVYF, AGVL…AWLL, and LLAW…LLIV.

It belongs to the PlsY family. In terms of assembly, probably interacts with PlsX.

It is found in the cell inner membrane. It catalyses the reaction an acyl phosphate + sn-glycerol 3-phosphate = a 1-acyl-sn-glycero-3-phosphate + phosphate. It functions in the pathway lipid metabolism; phospholipid metabolism. Functionally, catalyzes the transfer of an acyl group from acyl-phosphate (acyl-PO(4)) to glycerol-3-phosphate (G3P) to form lysophosphatidic acid (LPA). This enzyme utilizes acyl-phosphate as fatty acyl donor, but not acyl-CoA or acyl-ACP. The chain is Glycerol-3-phosphate acyltransferase from Pseudomonas savastanoi pv. phaseolicola (strain 1448A / Race 6) (Pseudomonas syringae pv. phaseolicola (strain 1448A / Race 6)).